The chain runs to 1406 residues: DNA-directed RNA polymerase subunit beta' (1406 aa).

C70, C72, C85, and C88 together coordinate Zn(2+). 3 residues coordinate Mg(2+): D460, D462, and D464. Zn(2+) contacts are provided by C814, C888, C895, and C898.

It belongs to the RNA polymerase beta' chain family. The RNAP catalytic core consists of 2 alpha, 1 beta, 1 beta' and 1 omega subunit. When a sigma factor is associated with the core the holoenzyme is formed, which can initiate transcription. Requires Mg(2+) as cofactor. The cofactor is Zn(2+).

It carries out the reaction RNA(n) + a ribonucleoside 5'-triphosphate = RNA(n+1) + diphosphate. Its function is as follows. DNA-dependent RNA polymerase catalyzes the transcription of DNA into RNA using the four ribonucleoside triphosphates as substrates. This Sodalis glossinidius (strain morsitans) protein is DNA-directed RNA polymerase subunit beta'.